Reading from the N-terminus, the 295-residue chain is Undecaprenyl-diphosphatase (295 aa).

A run of 7 helical transmembrane segments spans residues 12-34 (IAIAILQGATELFPVSSLGHAVV), 50-70 (FLPFLVFLHLGTAAALLLYFW), 95-115 (IFMLLVVATLPAIVVGGLLEH), 120-140 (LFESAPIAAFFLVVNGGLLLF), 209-229 (AHFSFLIALPIILGATVLEVP), 243-263 (TAALAAVAAGITAWLSTAFLM), and 272-292 (WALKPFAFYCIIAGLGALAWL).

The protein belongs to the UppP family.

The protein localises to the cell inner membrane. The enzyme catalyses di-trans,octa-cis-undecaprenyl diphosphate + H2O = di-trans,octa-cis-undecaprenyl phosphate + phosphate + H(+). In terms of biological role, catalyzes the dephosphorylation of undecaprenyl diphosphate (UPP). Confers resistance to bacitracin. In Granulibacter bethesdensis (strain ATCC BAA-1260 / CGDNIH1), this protein is Undecaprenyl-diphosphatase.